The primary structure comprises 645 residues: Putative galactocerebrosidase (645 aa).

A signal peptide spans 1–16; sequence MFSIFIKIILILPSIA. Substrate-binding residues include threonine 87 and tryptophan 128. Residue asparagine 141 is glycosylated (N-linked (GlcNAc...) asparagine). Residue asparagine 171 participates in substrate binding. Glutamate 172 (proton donor/acceptor) is an active-site residue. Residues asparagine 174 and asparagine 193 are each glycosylated (N-linked (GlcNAc...) asparagine). Residue glutamate 248 is the Nucleophile of the active site. Cysteine 261 and cysteine 365 form a disulfide bridge. Asparagine 274, asparagine 395, asparagine 411, asparagine 532, asparagine 616, asparagine 620, and asparagine 638 each carry an N-linked (GlcNAc...) asparagine glycan.

Belongs to the glycosyl hydrolase 59 family.

The catalysed reaction is a beta-D-Gal-(1&lt;-&gt;1')-ceramide + H2O = an N-acyl-sphingoid base + D-galactose. It catalyses the reaction a beta-D-galactosyl-(1&lt;-&gt;1')-N-acylsphing-4-enine + H2O = an N-acylsphing-4-enine + D-galactose. Hydrolyzes the galactose ester bonds of galactosylceramide, galactosylsphingoid base, lactosylceramide, and monogalactosyldiglyceride. C.elegans contain specific sphingoid bases, which are unique or different in structure compared to the sphingoid bases found in other animals. Two examples of these distinctive compounds are: 15-methylhexadecasphinganine and 15-methylhexadecasphing-4-enine. This chain is Putative galactocerebrosidase, found in Caenorhabditis elegans.